We begin with the raw amino-acid sequence, 167 residues long: E1B protein, small T-antigen (167 aa).

The interval 143 to 167 (GLDPVQEEEEEEENLRAGLDPSTEL) is disordered.

This sequence belongs to the adenoviridae E1B 19 kDa protein family.

The protein resides in the host cell membrane. The protein localises to the host nucleus envelope. It is found in the host nucleus lamina. Its function is as follows. Putative adenovirus Bcl-2 homolog that inhibits apoptosis induced by TNF or FAS pathways, as well as p53-mediated apoptosis. Without E1B 19K function, virus production is compromised because of premature death of host cell. Interacts with Bax protein in cell lysates. This Human adenovirus F serotype 40 (HAdV-40) protein is E1B protein, small T-antigen.